The following is a 256-amino-acid chain: Hydroxyacylglutathione hydrolase (256 aa).

Zn(2+) contacts are provided by H57, H59, D61, H62, H115, D134, and H172.

This sequence belongs to the metallo-beta-lactamase superfamily. Glyoxalase II family. Monomer. Zn(2+) serves as cofactor.

The enzyme catalyses an S-(2-hydroxyacyl)glutathione + H2O = a 2-hydroxy carboxylate + glutathione + H(+). It participates in secondary metabolite metabolism; methylglyoxal degradation; (R)-lactate from methylglyoxal: step 2/2. Thiolesterase that catalyzes the hydrolysis of S-D-lactoyl-glutathione to form glutathione and D-lactic acid. The sequence is that of Hydroxyacylglutathione hydrolase from Rhizobium etli (strain ATCC 51251 / DSM 11541 / JCM 21823 / NBRC 15573 / CFN 42).